The following is a 354-amino-acid chain: Methionine import ATP-binding protein MetN (354 aa).

Residues L8 to I250 enclose the ABC transporter domain. G42–S49 provides a ligand contact to ATP.

This sequence belongs to the ABC transporter superfamily. Methionine importer (TC 3.A.1.24) family. As to quaternary structure, the complex is composed of two ATP-binding proteins (MetN), two transmembrane proteins (MetI) and a solute-binding protein (MetQ).

The protein localises to the cell membrane. The enzyme catalyses L-methionine(out) + ATP + H2O = L-methionine(in) + ADP + phosphate + H(+). It carries out the reaction D-methionine(out) + ATP + H2O = D-methionine(in) + ADP + phosphate + H(+). Part of the ABC transporter complex MetNIQ involved in methionine import. Responsible for energy coupling to the transport system. The chain is Methionine import ATP-binding protein MetN from Streptococcus pyogenes serotype M4 (strain MGAS10750).